The sequence spans 286 residues: MAAISASMVKELRERTGLGMMECKKALVEAEGDIEKAIEDLRKSSGMKAAKKAGRVSADGVVAVKVSDDNSYAVVVEVNSETDFVARDENFLGFVGDVVGAAFDKKSADVAALMESGLEEKRQALVQKIGENINVRRASMLSSDVVGAYVHGNNRIAVLVALNGGNAELAKDIAMHIAAVNPQFVSRDDVSDEVIAKEREIYKAQADQSGKPAEIVDKMVDGRINKFLAEISLLEQAFVKDPDVKVGDLVKKAGAQVVAMVRYEVGEGIEKEEVDFAAEVAAQLKG.

The tract at residues 82-85 is involved in Mg(2+) ion dislocation from EF-Tu; the sequence is TDFV.

The protein belongs to the EF-Ts family.

The protein resides in the cytoplasm. Functionally, associates with the EF-Tu.GDP complex and induces the exchange of GDP to GTP. It remains bound to the aminoacyl-tRNA.EF-Tu.GTP complex up to the GTP hydrolysis stage on the ribosome. The sequence is that of Elongation factor Ts from Hahella chejuensis (strain KCTC 2396).